The primary structure comprises 416 residues: Glutamyl-tRNA reductase (416 aa).

Residues 49–52 (TCNR), Ser-105, 110–112 (EPQ), and Gln-116 contribute to the substrate site. The active-site Nucleophile is Cys-50. 185-190 (GAGETI) lines the NADP(+) pocket.

This sequence belongs to the glutamyl-tRNA reductase family. In terms of assembly, homodimer.

It catalyses the reaction (S)-4-amino-5-oxopentanoate + tRNA(Glu) + NADP(+) = L-glutamyl-tRNA(Glu) + NADPH + H(+). The protein operates within porphyrin-containing compound metabolism; protoporphyrin-IX biosynthesis; 5-aminolevulinate from L-glutamyl-tRNA(Glu): step 1/2. In terms of biological role, catalyzes the NADPH-dependent reduction of glutamyl-tRNA(Glu) to glutamate 1-semialdehyde (GSA). This Shewanella sediminis (strain HAW-EB3) protein is Glutamyl-tRNA reductase.